Consider the following 131-residue polypeptide: Histone H2B.1 (131 aa).

Basic and acidic residues predominate over residues 1–19; sequence MSAKAEKKPASKAPAEKKP. The interval 1–38 is disordered; that stretch reads MSAKAEKKPASKAPAEKKPAAKKTSTSTDGKKRSKARK. Residues lysine 7 and lysine 8 each carry the N6-acetyllysine; alternate modification. Residues lysine 7 and lysine 8 each participate in a glycyl lysine isopeptide (Lys-Gly) (interchain with G-Cter in SUMO); alternate cross-link. Residue serine 11 is modified to Phosphoserine. At lysine 12 the chain carries N6-acetyllysine. Lysine 17, lysine 18, lysine 22, and lysine 23 each carry N6-acetyllysine; alternate. Glycyl lysine isopeptide (Lys-Gly) (interchain with G-Cter in SUMO); alternate cross-links involve residues lysine 17 and lysine 18. An N6-butyryllysine; alternate modification is found at lysine 22. Lysine 23 carries the post-translational modification N6-methyllysine; alternate. The residue at position 35 (lysine 35) is an N6-succinyllysine. Lysine 38 is modified (N6,N6-dimethyllysine). Lysine 47 carries the N6-succinyllysine modification. Lysine 124 is covalently cross-linked (Glycyl lysine isopeptide (Lys-Gly) (interchain with G-Cter in ubiquitin)).

Belongs to the histone H2B family. The nucleosome is a histone octamer containing two molecules each of H2A, H2B, H3 and H4 assembled in one H3-H4 heterotetramer and two H2A-H2B heterodimers. The octamer wraps approximately 147 bp of DNA. Post-translationally, monoubiquitinated by the RAD6/UBC2-BRE1 complex to form H2BK123ub1. H2BK123ub1 gives a specific tag for epigenetic transcriptional activation and is also prerequisite for H3K4me and H3K79me formation. H2BK123ub1 also modulates the formation of double-strand breaks during meiosis and is a prerequisite for DNA-damage checkpoint activation. Deubiquitination is performed by UBP8 in presence of SGF11. Phosphorylated by STE20 to form H2BS10ph during progression through meiotic prophase. May be correlated with chromosome condensation. H2BS10ph is also formed after H(2)O(2) treatment, and is a step leading to apoptosis. In terms of processing, acetylated by GCN5, a component of the SAGA complex, to form H2BK11ac and H2BK16ac. H2BK16ac can also be formed by ESA1, a component of the NuA4 histone acetyltransferase (HAT) complex. Acetylation of N-terminal lysines and particularly formation of H2BK11acK16ac has a positive effect on transcription. Post-translationally, sumoylation to form H2BK6su or H2BK7su, and probably also H2BK16su or H2BK17su, occurs preferentially near the telomeres and represses gene transcription.

The protein localises to the nucleus. It localises to the chromosome. Core component of nucleosome. Nucleosomes wrap and compact DNA into chromatin, limiting DNA accessibility to the cellular machineries which require DNA as a template. Histones thereby play a central role in transcription regulation, DNA repair, DNA replication and chromosomal stability. DNA accessibility is regulated via a complex set of post-translational modifications of histones, also called histone code, and nucleosome remodeling. The sequence is that of Histone H2B.1 (HTB1) from Saccharomyces cerevisiae (strain ATCC 204508 / S288c) (Baker's yeast).